The following is a 315-amino-acid chain: Alpha- and gamma-adaptin-binding protein p34 (315 aa).

The tract at residues 197–233 (IGSADPCHPEQPHLPAADRTESLSDHRGGASNTTDAQ) is disordered. Residues 203–224 (CHPEQPHLPAADRTESLSDHRG) are compositionally biased toward basic and acidic residues. Residues S310 and S311 each carry the phosphoserine modification.

In terms of assembly, associated with AP-1 and AP-2 complexes.

The protein localises to the cytoplasm. It is found in the cytosol. In terms of biological role, may be involved in endocytic recycling of growth factor receptors such as EGFR. The chain is Alpha- and gamma-adaptin-binding protein p34 (AAGAB) from Pongo abelii (Sumatran orangutan).